Reading from the N-terminus, the 811-residue chain is N-terminal acetyltransferase B complex subunit arm1 (811 aa).

It belongs to the MDM20/NAA25 family. In terms of assembly, component of the N-terminal acetyltransferase B (NatB) complex.

The protein localises to the cytoplasm. Its function is as follows. Non-catalytic subunit of the NatB N-terminal acetyltransferase, which catalyzes acetylation of the amino-terminal methionine residues of all proteins beginning with Met-Asp or Met-Glu and of some proteins beginning with Met-Asn or Met-Met. The chain is N-terminal acetyltransferase B complex subunit arm1 (arm1) from Schizosaccharomyces pombe (strain 972 / ATCC 24843) (Fission yeast).